The primary structure comprises 689 residues: Ataxin-1-like (689 aa).

Basic and acidic residues predominate over residues 1–19 (MKPVHERSQECLPPKKRDL). 3 disordered regions span residues 1-46 (MKPV…SEWS), 185-223 (ATPP…LDLA), and 242-297 (LHET…GEGQ). The interval 20–197 (PVTSEDMGRT…PPQAPSPAHS (178 aa)) is interaction with NCOR2 and ATXN1. The tract at residues 20-197 (PVTSEDMGRT…PPQAPSPAHS (178 aa)) is self-association. Polar residues-rich tracts occupy residues 28–43 (RTTS…SDAS) and 200–219 (KAPS…STQP). Positions 257–268 (QESQSALEAAAA) are enriched in low complexity. Basic and acidic residues predominate over residues 273-285 (RPRERNLVRRESE). Ser-284 is subject to Phosphoserine. Position 330 is a phosphothreonine (Thr-330). The interval 357–405 (KEEPSPLNLSHHTPDHQGEGRGSARNPAELAEKSQARGFYPQSHQEPVK) is disordered. The residue at position 361 (Ser-361) is a Phosphoserine. The AXH domain maps to 457-588 (PPPITSSHLP…SISLQSLNSN (132 aa)). Residue Ser-615 is modified to Phosphoserine. Positions 617-647 (ELCDSEGKSQPAGEGSRVVEPSQPESGAQAC) are disordered.

The protein belongs to the ATXN1 family. In terms of assembly, homodimer. Interacts with CIC. Interacts (via AXH domain) with NCOR2. Interacts with ATXN1. Directly interacts with RBPJ; this interaction is disrupted in the presence of Notch intracellular domain. Competes with ATXN1 for RBPJ-binding. Found in a complex with CIC and ATXN1. As to expression, expressed in cerebellum and cerebral cortex.

The protein resides in the nucleus. The protein localises to the cell projection. It localises to the dendrite. Its function is as follows. Chromatin-binding factor that repress Notch signaling in the absence of Notch intracellular domain by acting as a CBF1 corepressor. Binds to the HEY promoter and might assist, along with NCOR2, RBPJ-mediated repression. Can suppress ATXN1 cytotoxicity in spinocerebellar ataxia type 1 (SCA1). In concert with CIC and ATXN1, involved in brain development. The chain is Ataxin-1-like (ATXN1L) from Homo sapiens (Human).